Reading from the N-terminus, the 254-residue chain is MCIAGKNIIFVAGLGGIGLDTNREIVKSGPKNLVILDRIENPAAIAELQAINPNVTVSFYPYDVTVALAESVKLLKTIFAKLKTVDLLVNGAGILDDHQIERTIAVNFTGTVNTTTAIMEFWDKRKGGPGGVIANICSVTGFNSIYQVPVYSASKAAALSFTSSLARLAPITGVTVYSINPGITDTTLVHKFNSWLDVEPRVAEKLLAFPTQTSLACAKNFVRAIEANKNGAIWKLDLNRLDEIEWTKHWDSGI.

10–33 (FVAGLGGIGLDTNREIVKSGPKNL) lines the NAD(+) pocket. Serine 138 serves as a coordination point for substrate. The active-site Proton acceptor is the tyrosine 151.

Belongs to the short-chain dehydrogenases/reductases (SDR) family. In terms of assembly, homodimer.

It catalyses the reaction a primary alcohol + NAD(+) = an aldehyde + NADH + H(+). The enzyme catalyses a secondary alcohol + NAD(+) = a ketone + NADH + H(+). The chain is Alcohol dehydrogenase (Adh) from Scaptomyza albovittata (Fruit fly).